Consider the following 1015-residue polypeptide: Cytosolic carboxypeptidase 1 (1015 aa).

Positions 384–462 are disordered; that stretch reads LPTATPSTPG…GALPKTTRLN (79 aa). Positions 416–451 are enriched in acidic residues; the sequence is EDGMDEEDEAFVRDDDDEGKDDRGSDDDDGKDDDEI. Positions 727 to 1013 constitute a Peptidase M14 domain; that stretch reads YPYTYSFLNS…DLLHSFLEMT (287 aa). Zn(2+) contacts are provided by H792, E795, and H891. Residue E977 is the Proton donor/acceptor of the active site.

This sequence belongs to the peptidase M14 family. Zn(2+) serves as cofactor. In terms of tissue distribution, in hermaphrodites and males, expressed in amphid and IL2 ciliated sensory neurons. In males, expressed in CEM head neurons, RnB and HOB tail neurons, and in gubernacular erector and retractor muscles.

Its subcellular location is the perikaryon. The protein localises to the cell projection. It is found in the cilium. The protein resides in the dendrite. In terms of biological role, catalyzes the deglutamylation of polyglutamate side chains generated by post-translational polyglutamylation of proteins such as tubulins. Via the deglutamylation of tubulin, regulates the localization and velocity of kinesin motors and the structural integrity of microtubules in sensory cilia. In male CEM sensory neurons, regulates the cilia release of bioactive extracellular vesicles. Also regulates microtubule dynamics in uterine muscle cells. In Caenorhabditis elegans, this protein is Cytosolic carboxypeptidase 1.